We begin with the raw amino-acid sequence, 374 residues long: Heme A synthase (374 aa).

The tract at residues 1–22 (MSDHIRAASSPSRHGSEHGWQH) is disordered. Helical transmembrane passes span 32-52 (ILVA…VMLG), 118-138 (RLWG…LAVT), 149-169 (LILI…MVAS), 184-204 (VVHL…ALSV), and 226-246 (LGLV…HAGL). Residue His-281 coordinates heme. 3 helical membrane passes run 283–300 (LLAT…LIGF), 309–329 (AVLP…ATLL), and 332–352 (VAVP…TAAI). Residue His-340 participates in heme binding.

It belongs to the COX15/CtaA family. Type 2 subfamily. As to quaternary structure, interacts with CtaB. Heme b is required as a cofactor.

Its subcellular location is the cell membrane. The catalysed reaction is Fe(II)-heme o + 2 A + H2O = Fe(II)-heme a + 2 AH2. Its pathway is porphyrin-containing compound metabolism; heme A biosynthesis; heme A from heme O: step 1/1. Its function is as follows. Catalyzes the conversion of heme O to heme A by two successive hydroxylations of the methyl group at C8. The first hydroxylation forms heme I, the second hydroxylation results in an unstable dihydroxymethyl group, which spontaneously dehydrates, resulting in the formyl group of heme A. This is Heme A synthase from Granulibacter bethesdensis (strain ATCC BAA-1260 / CGDNIH1).